The sequence spans 254 residues: 3-dehydroquinate dehydratase (254 aa).

3-dehydroquinate is bound by residues 47 to 49 (EFR) and Arg-83. His-144 (proton donor/acceptor) is an active-site residue. Catalysis depends on Lys-171, which acts as the Schiff-base intermediate with substrate. Arg-213, Ser-232, and Gln-236 together coordinate 3-dehydroquinate.

The protein belongs to the type-I 3-dehydroquinase family. As to quaternary structure, homodimer.

The catalysed reaction is 3-dehydroquinate = 3-dehydroshikimate + H2O. It functions in the pathway metabolic intermediate biosynthesis; chorismate biosynthesis; chorismate from D-erythrose 4-phosphate and phosphoenolpyruvate: step 3/7. Its function is as follows. Involved in the third step of the chorismate pathway, which leads to the biosynthesis of aromatic amino acids. Catalyzes the cis-dehydration of 3-dehydroquinate (DHQ) and introduces the first double bond of the aromatic ring to yield 3-dehydroshikimate. In Neisseria meningitidis serogroup B (strain ATCC BAA-335 / MC58), this protein is 3-dehydroquinate dehydratase.